We begin with the raw amino-acid sequence, 223 residues long: Deoxyribose-phosphate aldolase (223 aa).

The active-site Proton donor/acceptor is the D92. K158 functions as the Schiff-base intermediate with acetaldehyde in the catalytic mechanism. K188 serves as the catalytic Proton donor/acceptor.

Belongs to the DeoC/FbaB aldolase family. DeoC type 1 subfamily.

The protein localises to the cytoplasm. The enzyme catalyses 2-deoxy-D-ribose 5-phosphate = D-glyceraldehyde 3-phosphate + acetaldehyde. It functions in the pathway carbohydrate degradation; 2-deoxy-D-ribose 1-phosphate degradation; D-glyceraldehyde 3-phosphate and acetaldehyde from 2-deoxy-alpha-D-ribose 1-phosphate: step 2/2. Its function is as follows. Catalyzes a reversible aldol reaction between acetaldehyde and D-glyceraldehyde 3-phosphate to generate 2-deoxy-D-ribose 5-phosphate. This Mycobacterium avium (strain 104) protein is Deoxyribose-phosphate aldolase.